A 422-amino-acid chain; its full sequence is Leucine-rich repeat protein 1 (422 aa).

6 LRR repeats span residues 184–207 (LKNLTKLDLSHNCIKKLPATIGDL), 209–230 (HLQELNLNDNQLETFSVPLCTS), 233–258 (QKSLHSLDLSKNKIKALPVQFCQFRE), 260–279 (TNLNLNDNELIHLPFKIGQL), 280–301 (TNLRFLSAARNKLRNLPSEFKM), and 304–327 (LEYLDLFGNTFEKPEVIPIIKLQV).

Component of the probable ECS(LRR1) E3 ubiquitin-protein ligase complex which contains CUL2, RBX1, Elongin BC complex and LRR1. Interacts with CUL2, RBX1, ELOB and ELOC.

Its subcellular location is the nucleus. It participates in protein modification; protein ubiquitination. Functionally, substrate recognition subunit of an ECS (Elongin BC-CUL2/5-SOCS-box protein) E3 ubiquitin-protein ligase complex which mediates the ubiquitination and subsequent proteasomal degradation of target proteins. ECS(LRR1) ubiquitinates MCM7 and promotes CMG replisome disassembly by VCP and chromatin extraction during S-phase. May negatively regulate the 4-1BB-mediated signaling cascades which result in the activation of NK-kappaB and JNK1. The sequence is that of Leucine-rich repeat protein 1 from Mus musculus (Mouse).